Reading from the N-terminus, the 459-residue chain is Chromosomal replication initiator protein DnaA (459 aa).

Residues 1–74 (MQKIETFWHF…DEMAQDHFNE (74 aa)) form a domain I, interacts with DnaA modulators region. Residues 74–122 (ERISFRLELREPAESEAQTVRTSAQKNREDKKPAAEKTQGVTSRKTNPS) form a domain II region. The interval 87–122 (ESEAQTVRTSAQKNREDKKPAAEKTQGVTSRKTNPS) is disordered. Over residues 89 to 98 (EAQTVRTSAQ) the composition is skewed to polar residues. Basic and acidic residues predominate over residues 99–108 (KNREDKKPAA). A compositionally biased stretch (polar residues) spans 112-122 (QGVTSRKTNPS). The segment at 123 to 339 (QLNASFTFDA…GALKRVLAFS (217 aa)) is domain III, AAA+ region. Residues G167, G169, K170, and T171 each contribute to the ATP site. Residues 340–459 (RFTGHSISLD…FNALMHILRG (120 aa)) are domain IV, binds dsDNA.

This sequence belongs to the DnaA family. In terms of assembly, oligomerizes as a right-handed, spiral filament on DNA at oriC.

It is found in the cytoplasm. Plays an essential role in the initiation and regulation of chromosomal replication. ATP-DnaA binds to the origin of replication (oriC) to initiate formation of the DNA replication initiation complex once per cell cycle. Binds the DnaA box (a 9 base pair repeat at the origin) and separates the double-stranded (ds)DNA. Forms a right-handed helical filament on oriC DNA; dsDNA binds to the exterior of the filament while single-stranded (ss)DNA is stabiized in the filament's interior. The ATP-DnaA-oriC complex binds and stabilizes one strand of the AT-rich DNA unwinding element (DUE), permitting loading of DNA polymerase. After initiation quickly degrades to an ADP-DnaA complex that is not apt for DNA replication. Binds acidic phospholipids. This chain is Chromosomal replication initiator protein DnaA, found in Nitrosomonas europaea (strain ATCC 19718 / CIP 103999 / KCTC 2705 / NBRC 14298).